Reading from the N-terminus, the 381-residue chain is Succinyl-diaminopimelate desuccinylase (381 aa).

His72 contacts Zn(2+). Residue Asp74 is part of the active site. Asp105 is a Zn(2+) binding site. Glu139 serves as the catalytic Proton acceptor. Zn(2+) contacts are provided by Glu140, Glu168, and His354.

This sequence belongs to the peptidase M20A family. DapE subfamily. In terms of assembly, homodimer. Zn(2+) is required as a cofactor. It depends on Co(2+) as a cofactor.

It carries out the reaction N-succinyl-(2S,6S)-2,6-diaminopimelate + H2O = (2S,6S)-2,6-diaminopimelate + succinate. It functions in the pathway amino-acid biosynthesis; L-lysine biosynthesis via DAP pathway; LL-2,6-diaminopimelate from (S)-tetrahydrodipicolinate (succinylase route): step 3/3. Its function is as follows. Catalyzes the hydrolysis of N-succinyl-L,L-diaminopimelic acid (SDAP), forming succinate and LL-2,6-diaminopimelate (DAP), an intermediate involved in the bacterial biosynthesis of lysine and meso-diaminopimelic acid, an essential component of bacterial cell walls. This Shewanella sp. (strain ANA-3) protein is Succinyl-diaminopimelate desuccinylase.